We begin with the raw amino-acid sequence, 500 residues long: Bifunctional protein GlmU (500 aa).

The pyrophosphorylase stretch occupies residues 1–242 (MPVQTAVVVL…SAKVAGANDR (242 aa)). Residues 10–13 (LAAG), Lys24, Gln81, and 86–87 (GT) each bind UDP-N-acetyl-alpha-D-glucosamine. A Mg(2+)-binding site is contributed by Asp112. UDP-N-acetyl-alpha-D-glucosamine contacts are provided by Gly151, Glu167, Asn182, and Asn240. Asn240 contacts Mg(2+). The linker stretch occupies residues 243 to 263 (VQLSRLAAELNRRTVENWMRA). Residues 264–500 (GVTVVDPSTT…KQDLKDGIEQ (237 aa)) form an N-acetyltransferase region. Residues Arg345 and Lys363 each contribute to the UDP-N-acetyl-alpha-D-glucosamine site. Catalysis depends on His375, which acts as the Proton acceptor. The UDP-N-acetyl-alpha-D-glucosamine site is built by Tyr378 and Asn389. Residues Ala392, 398 to 399 (NY), Ser417, and Ala435 each bind acetyl-CoA. The disordered stretch occupies residues 472–500 (AEAAAAAGLHHSSDLHETEKQDLKDGIEQ). Residues 482 to 500 (HSSDLHETEKQDLKDGIEQ) show a composition bias toward basic and acidic residues.

In the N-terminal section; belongs to the N-acetylglucosamine-1-phosphate uridyltransferase family. This sequence in the C-terminal section; belongs to the transferase hexapeptide repeat family. As to quaternary structure, homotrimer. It depends on Mg(2+) as a cofactor.

The protein localises to the cytoplasm. The catalysed reaction is alpha-D-glucosamine 1-phosphate + acetyl-CoA = N-acetyl-alpha-D-glucosamine 1-phosphate + CoA + H(+). It catalyses the reaction N-acetyl-alpha-D-glucosamine 1-phosphate + UTP + H(+) = UDP-N-acetyl-alpha-D-glucosamine + diphosphate. It participates in nucleotide-sugar biosynthesis; UDP-N-acetyl-alpha-D-glucosamine biosynthesis; N-acetyl-alpha-D-glucosamine 1-phosphate from alpha-D-glucosamine 6-phosphate (route II): step 2/2. The protein operates within nucleotide-sugar biosynthesis; UDP-N-acetyl-alpha-D-glucosamine biosynthesis; UDP-N-acetyl-alpha-D-glucosamine from N-acetyl-alpha-D-glucosamine 1-phosphate: step 1/1. Its pathway is bacterial outer membrane biogenesis; LPS lipid A biosynthesis. Its function is as follows. Catalyzes the last two sequential reactions in the de novo biosynthetic pathway for UDP-N-acetylglucosamine (UDP-GlcNAc). The C-terminal domain catalyzes the transfer of acetyl group from acetyl coenzyme A to glucosamine-1-phosphate (GlcN-1-P) to produce N-acetylglucosamine-1-phosphate (GlcNAc-1-P), which is converted into UDP-GlcNAc by the transfer of uridine 5-monophosphate (from uridine 5-triphosphate), a reaction catalyzed by the N-terminal domain. The chain is Bifunctional protein GlmU from Rhodococcus jostii (strain RHA1).